A 427-amino-acid chain; its full sequence is DEAD-box ATP-dependent RNA helicase 56 (427 aa).

Residues 1–30 (MGDARDNEAYEEELLDYEEEDEKVPDSGNK) are disordered. Residues 9–23 (AYEEELLDYEEEDEK) are compositionally biased toward acidic residues. The short motif at 46-74 (SGFRDFLLKPELLRAIVDSGFEHPSEVQH) is the Q motif element. The Helicase ATP-binding domain maps to 77–250 (IPQAILGMDV…KKFMQDPMEI (174 aa)). 90–97 (AKSGMGKT) contacts ATP. The DECD box signature appears at 197–200 (DECD). The region spanning 278-423 (KLNDLLDALD…ELPEQIDTST (146 aa)) is the Helicase C-terminal domain.

Belongs to the DEAD box helicase family. DECD subfamily. As to quaternary structure, interacts with ALY2 and MOS11.

Its subcellular location is the nucleus. It carries out the reaction ATP + H2O = ADP + phosphate + H(+). ATP-dependent RNA helicase involved in pre-mRNA splicing. Required for the export of mRNA out of the nucleus. In addition to ssRNA and dsRNA, binds dsDNA, but not ssDNA. The sequence is that of DEAD-box ATP-dependent RNA helicase 56 (RH56) from Arabidopsis thaliana (Mouse-ear cress).